The primary structure comprises 475 residues: Methylenetetrahydrofolate--tRNA-(uracil-5-)-methyltransferase TrmFO (475 aa).

9 to 14 provides a ligand contact to FAD; that stretch reads GGGLAG. The tract at residues 427–447 is disordered; it reads APRNETGRRLRGPEKAALKKR.

This sequence belongs to the MnmG family. TrmFO subfamily. The cofactor is FAD.

It localises to the cytoplasm. It carries out the reaction uridine(54) in tRNA + (6R)-5,10-methylene-5,6,7,8-tetrahydrofolate + NADH + H(+) = 5-methyluridine(54) in tRNA + (6S)-5,6,7,8-tetrahydrofolate + NAD(+). The catalysed reaction is uridine(54) in tRNA + (6R)-5,10-methylene-5,6,7,8-tetrahydrofolate + NADPH + H(+) = 5-methyluridine(54) in tRNA + (6S)-5,6,7,8-tetrahydrofolate + NADP(+). Its function is as follows. Catalyzes the folate-dependent formation of 5-methyl-uridine at position 54 (M-5-U54) in all tRNAs. This chain is Methylenetetrahydrofolate--tRNA-(uracil-5-)-methyltransferase TrmFO, found in Methylobacterium radiotolerans (strain ATCC 27329 / DSM 1819 / JCM 2831 / NBRC 15690 / NCIMB 10815 / 0-1).